The following is an 875-amino-acid chain: Alanine--tRNA ligase (875 aa).

Residues H564, H568, C666, and H670 each coordinate Zn(2+).

Belongs to the class-II aminoacyl-tRNA synthetase family. Homotetramer. Zn(2+) serves as cofactor.

The protein resides in the cytoplasm. The enzyme catalyses tRNA(Ala) + L-alanine + ATP = L-alanyl-tRNA(Ala) + AMP + diphosphate. Catalyzes the attachment of alanine to tRNA(Ala) in a two-step reaction: alanine is first activated by ATP to form Ala-AMP and then transferred to the acceptor end of tRNA(Ala). Also edits incorrectly charged Ser-tRNA(Ala) and Gly-tRNA(Ala) via its editing domain. The chain is Alanine--tRNA ligase from Yersinia enterocolitica serotype O:8 / biotype 1B (strain NCTC 13174 / 8081).